Reading from the N-terminus, the 205-residue chain is Holliday junction resolvase RecU (205 aa).

Residues 1–26 form a disordered region; the sequence is MIRYPNGKSYQPIQPIGTKKRISGES. The Mg(2+) site is built by Thr86, Asp88, Glu101, and Gln120.

This sequence belongs to the RecU family. Mg(2+) is required as a cofactor.

It localises to the cytoplasm. The catalysed reaction is Endonucleolytic cleavage at a junction such as a reciprocal single-stranded crossover between two homologous DNA duplexes (Holliday junction).. Functionally, endonuclease that resolves Holliday junction intermediates in genetic recombination. Cleaves mobile four-strand junctions by introducing symmetrical nicks in paired strands. Promotes annealing of linear ssDNA with homologous dsDNA. Required for DNA repair, homologous recombination and chromosome segregation. This chain is Holliday junction resolvase RecU, found in Bacillus pumilus (strain SAFR-032).